Consider the following 335-residue polypeptide: Adenine deaminase (335 aa).

Zn(2+) is bound by residues His17, His19, and His197. Glu200 acts as the Proton donor in catalysis. Asp278 serves as a coordination point for Zn(2+). Position 279 (Asp279) interacts with substrate.

This sequence belongs to the metallo-dependent hydrolases superfamily. Adenosine and AMP deaminases family. Adenine deaminase type 2 subfamily. It depends on Zn(2+) as a cofactor.

The catalysed reaction is adenine + H2O + H(+) = hypoxanthine + NH4(+). Functionally, catalyzes the hydrolytic deamination of adenine to hypoxanthine. Plays an important role in the purine salvage pathway and in nitrogen catabolism. This Marinomonas sp. (strain MWYL1) protein is Adenine deaminase.